The sequence spans 561 residues: Alpha-1D adrenergic receptor (561 aa).

Residues 1 to 90 (MTFRDILSVT…VGGLVVSAQG (90 aa)) are Extracellular-facing. Residues 10–71 (TFEGPRSSSS…SSTGEPGAAA (62 aa)) form a disordered region. Positions 21-56 (GGSGAGGGAGTVGPEGGAVGGVPGATGGGAVVGTGS) are enriched in gly residues. Asn60 and Asn76 each carry an N-linked (GlcNAc...) asparagine glycan. A helical membrane pass occupies residues 91-115 (VGVGVFLAAFILTAVAGNLLVILSV). At 116–127 (ACNRHLQTVTNY) the chain is on the cytoplasmic side. A helical membrane pass occupies residues 128–153 (FIVNLAVADLLLSAAVLPFSATMEVL). The Extracellular portion of the chain corresponds to 154 to 163 (GFWAFGRTFC). The helical transmembrane segment at 164–186 (DVWAAVDVLCCTASILSLCTISV) threads the bilayer. At 187–207 (DRYVGVRHSLKYPAIMTERKA) the chain is on the cytoplasmic side. Residues 208–232 (AAILALLWAVALVVSVGPLLGWKEP) form a helical membrane-spanning segment. Residues 233–245 (VPPDERFCGITEE) lie on the Extracellular side of the membrane. The helical transmembrane segment at 246–269 (VGYAIFSSVCSFYLPMAVIVVMYC) threads the bilayer. At 270 to 342 (RVYVVARSTT…KFSREKKAAK (73 aa)) the chain is on the cytoplasmic side. A helical transmembrane segment spans residues 343 to 367 (TLAIVVGVFVLCWFPFFFVLPLGSL). At 368-374 (FPQLKPS) the chain is on the extracellular side. A helical transmembrane segment spans residues 375–399 (EGVFKVIFWLGYFNSCVNPLIYPCS). Residues 400–561 (SREFKRAFLR…DYSNLRETDI (162 aa)) lie on the Cytoplasmic side of the membrane. A lipid anchor (S-palmitoyl cysteine) is attached at Cys413. The interval 452-481 (APLALTAHPGAGSADTPETQDSVSSSRKPA) is disordered. The span at 467–479 (TPETQDSVSSSRK) shows a compositional bias: polar residues.

It belongs to the G-protein coupled receptor 1 family. Adrenergic receptor subfamily. ADRA1D sub-subfamily. In terms of assembly, interacts with FLNA (via filamin repeat 21); increases PKA-mediated phosphorylation of FLNA. Post-translationally, palmitoylated. Palmitoylation by ZDHHC21 may increase the expression of the receptor and regulate downstream signaling. Vas deferens, hippocampus, cerebral cortex, aorta, brain stem, heart and spleen.

The protein localises to the cell membrane. This alpha-adrenergic receptor mediates its effect through the influx of extracellular calcium. The protein is Alpha-1D adrenergic receptor (Adra1d) of Rattus norvegicus (Rat).